The chain runs to 150 residues: Transthyretin (150 aa).

The N-terminal stretch at 1 to 20 (MASYRLLLLCLAGLVFVSEA) is a signal peptide. A Sulfocysteine modification is found at Cys-30. Position 35 (Lys-35) interacts with L-thyroxine. Glu-62 is modified (4-carboxyglutamate). Residue Glu-74 participates in L-thyroxine binding. The N-linked (GlcNAc...) asparagine glycan is linked to Asn-118. Ser-137 serves as a coordination point for L-thyroxine.

It belongs to the transthyretin family. Homotetramer. Dimer of dimers. In the homotetramer, subunits assemble around a central channel that can accommodate two ligand molecules. Interacts with RBP4. Post-translationally, sulfonation of the reactive cysteine Cys-30 enhances the stability of the native conformation of TTR, avoiding misassembly of the protein leading to amyloid formation. As to expression, detected in plasma and cerebrospinal fluid (at protein level). Highly expressed in the choroid plexus. Detected in liver.

The protein resides in the secreted. Functionally, thyroid hormone-binding protein. Probably transports thyroxine from the bloodstream to the brain. This chain is Transthyretin (TTR), found in Sus scrofa (Pig).